The chain runs to 357 residues: Isoflavone 7-O-methyltransferase (357 aa).

S-adenosyl-L-methionine is bound by residues 200-203, Asp-224, 224-225, 244-245, and Lys-258; these read VGGG, DR, and DM. Catalysis depends on His-262, which acts as the Proton acceptor.

Belongs to the class I-like SAM-binding methyltransferase superfamily. Cation-independent O-methyltransferase family. COMT subfamily.

It carries out the reaction a 7-hydroxyisoflavone + S-adenosyl-L-methionine = a 7-methoxyisoflavone + S-adenosyl-L-homocysteine + H(+). In terms of biological role, 7-O-methyltransferase involved in the biosynthesis of isoformononetin. Can use daidzein as substrate, but not medicarpin or 2,7,4'-trihydroxyisoflavanone. This Glycyrrhiza echinata (Licorice) protein is Isoflavone 7-O-methyltransferase (D7OMT).